We begin with the raw amino-acid sequence, 1941 residues long: WD repeat-containing protein 81 (1941 aa).

The tract at residues 1-27 (MAQGSGGREGALRTPAGGWHSPPSPDM) is disordered. The interval 1–650 (MAQGSGGREG…TPCEASWTRD (650 aa)) is necessary and sufficient for the interaction with SQSTM1. The BEACH domain occupies 337-614 (GQPTGQEELR…IPKLLVQTIQ (278 aa)). Disordered stretches follow at residues 618–637 (GREDFTENPGQLPNGVGRPV), 694–718 (VASASRPGRRNKAAGADPGEGEEGR), 1022–1074 (SKDL…VSFH), 1097–1217 (PQEA…EGKE), 1523–1556 (PSSRNPASVEPTMPGTGPEWDPHGGGCPQDDGHS), and 1569–1602 (QIPNDSRPENPGPLGPISGVGGGGLGSGSDDNAL). Residues 1137 to 1146 (LRSGDSSQDL) are compositionally biased toward polar residues. Positions 1151 to 1174 (GSEEEEEEEDSCVVLEEEEGEQEE) are enriched in acidic residues. A compositionally biased stretch (gly residues) spans 1586–1595 (SGVGGGGLGS). 7 WD repeats span residues 1639–1677 (IRLQSFPGHSGAVKCVAPLSSEDFFLSGSKDRTVRLWPL), 1686–1724 (ETAPRLVYTQHRKSVFFVGQLEAPQHVVSCDGAVHVWDP), 1729–1769 (TLRT…FVDC), 1777–1815 (EFRLGGGLNPGLVRALAISPSGRSVVAGFSSGFMVLLDT), 1819–1856 (LVLRGWPAHEGDILQIKAVEGSVLVSSSSDHSLTVWKE), 1860–1896 (KPTHHYKSASDPIHTFDLYGSEVVTGTVSNKIGVCSL), and 1902–1941 (QATTKLSSENFRGTLTSLALLPTKRHLLLGSDNGVIRLLA).

This sequence belongs to the WD repeat WDR81 family. In terms of assembly, interacts with WDR91; involved in early to late endosome cargo transport. Interacts with BECN1; negatively regulates the PI3 kinase/PI3K activity associated with endosomal membranes. Interacts with SQSTM1; the interaction is direct and regulates the interaction of SQSTM1 with ubiquitinated proteins. Interacts with MAP1LC3C; recruits MAP1LC3C to ubiquitinated protein aggregates in the aggrephagy process. Widely expressed. In the brain, highest levels in cerebellum and corpus callosum.

The protein resides in the early endosome membrane. The protein localises to the late endosome membrane. It is found in the lysosome membrane. Its subcellular location is the cytoplasmic vesicle. It localises to the autophagosome membrane. The protein resides in the mitochondrion. The protein localises to the cytoplasm. It is found in the cytosol. Functionally, functions as a negative regulator of the PI3 kinase/PI3K activity associated with endosomal membranes via BECN1, a core subunit of the PI3K complex. By modifying the phosphatidylinositol 3-phosphate/PtdInsP3 content of endosomal membranes may regulate endosome fusion, recycling, sorting and early to late endosome transport. It is for instance, required for the delivery of cargos like BST2/tetherin from early to late endosome and thereby participates indirectly to their degradation by the lysosome. May also play a role in aggrephagy, the macroautophagic degradation of ubiquitinated protein aggregates. In this process, may regulate the interaction of SQSTM1 with ubiquitinated proteins and also recruit MAP1LC3C. May also be involved in maintenance of normal mitochondrial structure and organization. The polypeptide is WD repeat-containing protein 81 (Homo sapiens (Human)).